The following is a 527-amino-acid chain: Ribosomal protein S6 kinase beta-1 (527 aa).

The disordered stretch occupies residues 1 to 54; sequence MRRRRRRDGFYPAPDFRDREAEDMAGVFDIDLDQPEDAGSEDELEEGGQLNESM. The TOS motif motif lies at 28–32; the sequence is FDIDL. Residues 30 to 46 are compositionally biased toward acidic residues; that stretch reads IDLDQPEDAGSEDELEE. Positions 91-352 constitute a Protein kinase domain; it reads FELLRVLGKG…AGEVQAHPFF (262 aa). ATP is bound by residues 97 to 105 and lysine 123; that span reads LGKGGYGKV. The active-site Proton acceptor is the aspartate 218. Threonine 252 is subject to Phosphothreonine; by PDPK1. Positions 353 to 423 constitute an AGC-kinase C-terminal domain; that stretch reads RHINWEELLA…VAPSVLESVK (71 aa). Serine 394 carries the phosphoserine modification. At threonine 412 the chain carries Phosphothreonine; by MTOR, NEK6 and NEK7. An autoinhibitory domain region spans residues 424–527; sequence EKFSFEPKIR…PEHLRMNLEL (104 aa). Phosphoserine occurs at positions 434 and 441. Phosphothreonine is present on threonine 444. Residues serine 447 and serine 452 each carry the phosphoserine modification. Residue lysine 516 is modified to N6-acetyllysine.

Belongs to the protein kinase superfamily. AGC Ser/Thr protein kinase family. S6 kinase subfamily. In terms of assembly, interacts with PPP1R9A/neurabin-1. Interacts with RPTOR. Interacts with IRS1. Interacts with EIF3B and EIF3C. Interacts with TRAF4. Interacts with POLDIP3. Interacts (via N-terminus) with IER5. Phosphorylation at Thr-412 is regulated by mTORC1. The phosphorylation at this site is maintained by an agonist-dependent autophosphorylation mechanism. Activated by phosphorylation at Thr-252 by PDPK1. Dephosphorylation by PPP1CC at Thr-412 in mitochondrion.

It localises to the cytoplasm. Its subcellular location is the synapse. The protein resides in the synaptosome. It is found in the mitochondrion outer membrane. The protein localises to the mitochondrion. It catalyses the reaction L-seryl-[protein] + ATP = O-phospho-L-seryl-[protein] + ADP + H(+). It carries out the reaction L-threonyl-[protein] + ATP = O-phospho-L-threonyl-[protein] + ADP + H(+). Its activity is regulated as follows. Inactivated by binding to URI1. Activation requires multiple phosphorylation events on serine/threonine residues. Activation appears to be first mediated by phosphorylation of multiple sites in the autoinhibitory domain, which facilitates phosphorylation at Thr-412, disrupting the autoinhibitory mechanism and allowing phosphorylation of Thr-252 by PDPK1. The active conformation of the kinase is believed to be stabilized by a mechanism involving three conserved phosphorylation sites located in the kinase domain activation loop (Thr-252) and in the AGC-kinase C-terminal domain (Ser-394 in the middle of the tail/linker region and Thr-412 within a hydrophobic motif at its end). Activated by mTORC1; isoform Alpha I and isoform Alpha II are sensitive to rapamycin, which inhibits activating phosphorylation at Thr-412. Activated by PDPK1. Its function is as follows. Serine/threonine-protein kinase that acts downstream of mTOR signaling in response to growth factors and nutrients to promote cell proliferation, cell growth and cell cycle progression. Regulates protein synthesis through phosphorylation of EIF4B, RPS6 and EEF2K, and contributes to cell survival by repressing the pro-apoptotic function of BAD. Under conditions of nutrient depletion, the inactive form associates with the EIF3 translation initiation complex. Upon mitogenic stimulation, phosphorylation by the mechanistic target of rapamycin complex 1 (mTORC1) leads to dissociation from the EIF3 complex and activation. The active form then phosphorylates and activates several substrates in the pre-initiation complex, including the EIF2B complex and the cap-binding complex component EIF4B. Also controls translation initiation by phosphorylating a negative regulator of EIF4A, PDCD4, targeting it for ubiquitination and subsequent proteolysis. Promotes initiation of the pioneer round of protein synthesis by phosphorylating POLDIP3/SKAR. In response to IGF1, activates translation elongation by phosphorylating EEF2 kinase (EEF2K), which leads to its inhibition and thus activation of EEF2. Also plays a role in feedback regulation of mTORC2 by mTORC1 by phosphorylating MAPKAP1/SIN1, MTOR and RICTOR, resulting in the inhibition of mTORC2 and AKT1 signaling. Also involved in feedback regulation of mTORC1 and mTORC2 by phosphorylating DEPTOR. Mediates cell survival by phosphorylating the pro-apoptotic protein BAD and suppressing its pro-apoptotic function. Phosphorylates mitochondrial URI1 leading to dissociation of a URI1-PPP1CC complex. The free mitochondrial PPP1CC can then dephosphorylate RPS6KB1 at Thr-412, which is proposed to be a negative feedback mechanism for the RPS6KB1 anti-apoptotic function. Mediates TNF-alpha-induced insulin resistance by phosphorylating IRS1 at multiple serine residues, resulting in accelerated degradation of IRS1. In cells lacking functional TSC1-2 complex, constitutively phosphorylates and inhibits GSK3B. May be involved in cytoskeletal rearrangement through binding to neurabin. Phosphorylates and activates the pyrimidine biosynthesis enzyme CAD, downstream of MTOR. Following activation by mTORC1, phosphorylates EPRS and thereby plays a key role in fatty acid uptake by adipocytes and also most probably in interferon-gamma-induced translation inhibition. This is Ribosomal protein S6 kinase beta-1 (RPS6KB1) from Bos taurus (Bovine).